A 1254-amino-acid polypeptide reads, in one-letter code: DNA-directed RNA polymerase subunit beta' (1254 aa).

4 residues coordinate Zn(2+): Cys59, Cys61, Cys76, and Cys79. The Mg(2+) site is built by Asp501, Asp503, and Asp505. Zn(2+)-binding residues include Cys871, Cys946, Cys953, and Cys956.

It belongs to the RNA polymerase beta' chain family. The RNAP catalytic core consists of 2 alpha, 1 beta, 1 beta' and 1 omega subunit. When a sigma factor is associated with the core the holoenzyme is formed, which can initiate transcription. Mg(2+) serves as cofactor. The cofactor is Zn(2+).

It carries out the reaction RNA(n) + a ribonucleoside 5'-triphosphate = RNA(n+1) + diphosphate. Functionally, DNA-dependent RNA polymerase catalyzes the transcription of DNA into RNA using the four ribonucleoside triphosphates as substrates. The chain is DNA-directed RNA polymerase subunit beta' from Mesoplasma florum (strain ATCC 33453 / NBRC 100688 / NCTC 11704 / L1) (Acholeplasma florum).